Here is a 2527-residue protein sequence, read N- to C-terminus: Neurogenic locus notch homolog protein 1 (2527 aa).

The signal sequence occupies residues 1–36 (MGRSDSRAGALLEGGCEQNIDPRRAAHCHHPRLATS). Residues 37 to 1741 (SLRCSQPSGT…VEPPLPSQLH (1705 aa)) lie on the Extracellular side of the membrane. Cystine bridges form between Cys40–Cys53, Cys47–Cys62, Cys64–Cys73, Cys79–Cys90, Cys84–Cys103, Cys105–Cys114, Cys122–Cys133, Cys127–Cys143, Cys145–Cys154, Cys160–Cys171, Cys165–Cys180, Cys182–Cys191, Cys198–Cys211, Cys205–Cys220, Cys222–Cys231, Cys238–Cys249, Cys243–Cys259, Cys261–Cys270, Cys277–Cys288, Cys282–Cys297, Cys299–Cys308, Cys315–Cys328, Cys322–Cys337, Cys339–Cys348, Cys355–Cys366, Cys360–Cys375, Cys377–Cys386, Cys392–Cys403, Cys397–Cys414, Cys416–Cys425, Cys432–Cys445, Cys439–Cys454, and Cys456–Cys465. N-linked (GlcNAc...) asparagine glycosylation occurs at Asn57. 3 consecutive EGF-like domains span residues 75–115 (DPNP…PLCL), 118–155 (LDNACLANPCRNGGTCDLLTLTEYKCRCPPGWSGKSCQ), and 156–192 (QADPCASNPCANGGQCLPFESSYICGCPPGFHGPTCR). O-linked (Glc...) serine glycosylation occurs at Ser81. Residue Thr89 is glycosylated (O-linked (Fuc...) threonine). The O-linked (Fuc...) threonine glycan is linked to Thr132. Residue Ser162 is glycosylated (O-linked (Glc...) serine). One can recognise an EGF-like 4; calcium-binding domain in the interval 194 to 232 (DVNECSQNPGLCRHGGTCHNEIGSYRCVCRATHTGPHCE). Thr210 carries O-linked (Fuc...) threonine glycosylation. The region spanning 234-271 (PYVPCSPSPCQNGGTCRPTGDTTHECACLPGFAGQNCE) is the EGF-like 5 domain. O-linked (Fuc...) threonine; alternate glycosylation occurs at Thr248. Thr248 is a glycosylation site (O-linked (GalNAc...) threonine; alternate). One can recognise an EGF-like 6; calcium-binding domain in the interval 273–309 (NVDDCPGNNCKNGGACVDGVNTYNCRCPPEWTGQYCT). One can recognise an EGF-like 7; calcium-binding domain in the interval 311–349 (DVDECQLMPNACQNGGTCHNTHGGYNCVCVNGWTGEDCS). Thr327 is a glycosylation site (O-linked (Fuc...) threonine). The EGF-like 8; calcium-binding domain occupies 351–387 (NIDDCASAACFQGATCHDRVASFYCECPHGRTGLLCH). Residue Ser357 is glycosylated (O-linked (Glc...) serine). Thr365 is a glycosylation site (O-linked (Fuc...) threonine). The EGF-like 9 domain occupies 388 to 426 (LNDACISNPCNEGSNCDTNPVNGKAICTCPSGYTGPACS). Residue Ser394 is glycosylated (O-linked (Glc...) serine). Residues 428 to 466 (DVDECALGANPCEHAGKCLNTLGSFECQCLQGYTGPRCE) form the EGF-like 10; calcium-binding domain. The tract at residues 436-437 (AN) is interaction with DLL4. Positions 448 and 451 each coordinate Ca(2+). Ser451 carries an O-linked (Glc...) serine glycan. The tract at residues 464–468 (RCEID) is interaction with DLL4. 3 residues coordinate Ca(2+): Asp468, Val469, and Glu471. Residues 468 to 504 (DVNECISNPCQNDATCLDQIGEFQCICMPGYEGVYCE) form the EGF-like 11; calcium-binding domain. Cystine bridges form between Cys472/Cys483, Cys477/Cys492, and Cys494/Cys503. An O-linked (Glc...) serine glycan is attached at Ser474. The O-linked (Fuc...) threonine glycan is linked to Thr482. Residues Asp485 and Gln486 each contribute to the Ca(2+) site. 3 residues coordinate Ca(2+): Asn506, Thr507, and Glu509. Residues 506-542 (NTDECASSPCLHNGHCMDKINEFLCQCPKGFSGHLCQ) enclose the EGF-like 12; calcium-binding domain. Disulfide bonds link Cys510-Cys521, Cys515-Cys530, Cys532-Cys541, Cys548-Cys559, Cys553-Cys568, Cys570-Cys579, Cys586-Cys596, Cys591-Cys605, Cys607-Cys616, Cys623-Cys634, Cys628-Cys643, Cys645-Cys654, Cys661-Cys671, Cys666-Cys680, Cys682-Cys691, Cys698-Cys709, Cys703-Cys718, Cys720-Cys729, Cys736-Cys746, Cys741-Cys755, Cys757-Cys766, Cys773-Cys784, Cys778-Cys793, Cys795-Cys804, Cys811-Cys822, Cys816-Cys831, Cys833-Cys842, and Cys849-Cys860. Ser512 carries O-linked (Glc...) serine glycosylation. Positions 523 and 524 each coordinate Ca(2+). One can recognise an EGF-like 13; calcium-binding domain in the interval 544–580 (DVDECASTPCKNGAKCLDGPNTYTCVCTEGYTGTHCE). Ser550 is a glycosylation site (O-linked (Glc...) serine). The EGF-like 14; calcium-binding domain occupies 582-617 (DIDECDPDPCHYGFCKDGVATFTCLCQPGYTGHHCE). Residues 619–655 (NINECHSQPCRHGGTCQDRDNSYLCLCLKGTTGPNCE) enclose the EGF-like 15; calcium-binding domain. O-linked (Glc...) serine glycosylation occurs at Ser625. Thr633 carries an O-linked (Fuc...) threonine glycan. The 36-residue stretch at 657–692 (NLDDCASNPCDSGTCLDKIDGYECACEPGYTGSMCN) folds into the EGF-like 16; calcium-binding domain. Ser663 is a glycosylation site (O-linked (Glc...) serine). The EGF-like 17; calcium-binding domain occupies 694 to 730 (NIDECAGSPCHNGGTCEDGIAGFTCRCPEGYHDPTCL). The O-linked (Fuc...) threonine glycan is linked to Thr708. The EGF-like 18; calcium-binding domain occupies 732 to 767 (EVNECNSNPCIHGACRDGLNGYKCDCAPGWSGTNCD). Ser738 carries O-linked (Glc...) serine glycosylation. The region spanning 769 to 805 (NNNECESNPCVNGGTCKDMTSGYVCTCREGFSGPNCQ) is the EGF-like 19 domain. O-linked (Glc...) serine glycosylation is present at Ser775. Thr783 is a glycosylation site (O-linked (Fuc...) threonine). Ser800 carries O-linked (GlcNAc) serine glycosylation. An EGF-like 20; calcium-binding domain is found at 807-843 (NINECASNPCLNQGTCIDDVAGYKCNCPLPYTGATCE). Ser813 carries O-linked (Glc...) serine glycosylation. The O-linked (Fuc...) threonine glycan is linked to Thr821. Residues 845–883 (VLAPCATSPCKNSGVCKESEDYESFSCVCPTGWQGQTCE) form the EGF-like 21 domain. The 37-residue stretch at 885-921 (DINECVKSPCRHGASCQNTNGSYRCLCQAGYTGRNCE) folds into the EGF-like 22; calcium-binding domain. Asn904 carries N-linked (GlcNAc...) asparagine glycosylation. Thr916 is a glycosylation site (O-linked (GlcNAc) threonine). The EGF-like 23 domain occupies 923 to 959 (DIDDCRPNPCHNGGSCTDGINMAFCDCLPGFQGAFCE). An O-linked (Fuc) serine glycan is attached at Ser937. The 37-residue stretch at 961 to 997 (DINECASNPCRNGANCTDCVDSYTCTCPAGFNGIHCE) folds into the EGF-like 24; calcium-binding domain. Ser967 carries O-linked (Glc...) serine glycosylation. N-linked (GlcNAc...) asparagine glycosylation is present at Asn975. EGF-like domains follow at residues 999 to 1035 (NTPDCTESSCFNGGTCVDGINSFTCLCPPGFTGSYCQ), 1037 to 1073 (DVNECDSRPCLHGGTCQDSYGTYKCTCPQGYTGLNCQ), 1075 to 1111 (LVHWCDSAPCKNGGKCWQTNTQYHCECRSGWTGFNCD), 1113 to 1159 (LSVS…SYCE), and 1161 to 1197 (EVDECSPNPCQNGATCTDYLGGFSCKCVAGYHGSNCS). Thr1013 carries O-linked (Fuc...) threonine glycosylation. Ser1043 carries an O-linked (Glc...) serine glycan. Thr1051 carries O-linked (Fuc...) threonine glycosylation. Ser1081 is a glycosylation site (O-linked (Glc...) serine). Cys1117 and Cys1138 are disulfide-bonded. O-linked (Fuc...) threonine glycosylation is present at Thr1175. An N-linked (GlcNAc...) asparagine glycan is attached at Asn1195. An EGF-like 30; calcium-binding domain is found at 1199 to 1235 (EINECLSQPCQNGGTCIDLTNTYKCSCPRGTQGVHCE). An O-linked (Glc...) serine glycan is attached at Ser1205. Thr1213 carries an O-linked (Fuc...) threonine glycan. The EGF-like 31; calcium-binding domain maps to 1237–1281 (NVDDCHPHLDPASRSPKCFNNGTCVDQVGGYSCTCPPGFVGERCE). A glycan (N-linked (GlcNAc...) asparagine) is linked at Asn1257. 4 EGF-like domains span residues 1283 to 1321 (DINECLSNPCDPRGTQDCVQRVNDFHCECRAGHTGRRCE), 1323 to 1362 (VINGCRGKPCKNGGVCAVASNTARGFICRCPAGFEGATCE), 1364 to 1400 (DARTCGSLRCLNGGTCISGPRSPTCLCLGSFTGPECQ), and 1403 to 1442 (ASSPCVGSNPCYNQGTCEPTSESPFYRCLCPAKFNGLLCH). An O-linked (Glc...) serine glycan is attached at Ser1289. An O-linked (Fuc...) threonine glycan is attached at Thr1378. O-linked (GlcNAc...) threonine glycosylation occurs at Thr1395. O-linked (Fuc...) threonine; alternate glycosylation is present at Thr1418. The O-linked (GalNAc...) threonine; alternate glycan is linked to Thr1418. LNR repeat units follow at residues 1465–1505 (CELP…PWKN), 1506–1547 (CTQS…CNPL), and 1548–1587 (YDQYCKDHFSDGHCDQGCNSAECDWDGLDCADHVPERLAA). Residues Asp1473, Asn1476, Asp1491, and Asp1494 each coordinate Ca(2+). Asn1505 carries an N-linked (GlcNAc...) asparagine glycan. N-linked (GlcNAc...) asparagine glycosylation occurs at Asn1603. The O-linked (GalNAc...) threonine glycan is linked to Thr1731. Residues 1734 to 1766 (PPLPSQLHLMYLAAAAFVLLFFVGCGVLLSRKR) are interaction with PSEN1. A helical membrane pass occupies residues 1742-1762 (LMYLAAAAFVLLFFVGCGVLL). The Cytoplasmic segment spans residues 1763 to 2527 (SRKRRRQHGQ…QITHIPEAFK (765 aa)). Lys1765 is covalently cross-linked (Glycyl lysine isopeptide (Lys-Gly) (interchain with G-Cter in ubiquitin)). The interval 1786-1814 (KKKRREPLGEDSVGLKPLKNASDGALMDD) is disordered. Thr1867 carries the post-translational modification Phosphothreonine. ANK repeat units follow at residues 1933–1962 (TGETALHLAARYSRSDAAKRLLEASADANI), 1966–1996 (MGRTPLHAAVSADAQGVFQILLRNRATDLDA), 2000–2029 (DGTTPLILAARLAVEGMLEDLINSHADVNA), 2033–2062 (LGKSALHWAAAVNNVDAAVVLLKNGANKDM), and 2066–2095 (KEETPLFLAAREGSYETAKVLLDHFANRDI). Residues 1953-1961 (LLEASADAN) are HIF1AN-binding. A (3S)-3-hydroxyasparagine; by HIF1AN; partial modification is found at Asn1961. Residues 2020–2028 (LINSHADVN) form an HIF1AN-binding region. Position 2028 is a (3S)-3-hydroxyasparagine; by HIF1AN (Asn2028). Disordered stretches follow at residues 2157–2201 (SATQ…DSSS), 2378–2424 (QPQN…SLPV), and 2436–2527 (PTSL…EAFK). Low complexity predominate over residues 2378–2391 (QPQNLQPPSQPHLS). Positions 2436 to 2474 (PTSLPSSMVPPMTTTQFLTPPSQHSYSSSPVDNTPSHQL) are enriched in polar residues. A compositionally biased stretch (low complexity) spans 2484–2499 (PSPESPDQWSSSSPHS). Residues 2500-2520 (NISDWSEGISSPPTSMPSQIT) are compositionally biased toward polar residues.

Belongs to the NOTCH family. In terms of assembly, heterodimer of a C-terminal fragment N(TM) and an N-terminal fragment N(EC) which are probably linked by disulfide bonds. Interacts with DNER, DTX1, DTX2 and RBPJ/RBPSUH. Also interacts with MAML1, MAML2 and MAML3 which act as transcriptional coactivators for NOTCH1. Notch 1 intracellular domain interacts with SNW1; the interaction involves multimerized NOTCH1 NICD and is implicated in a formation of an intermediate preactivation complex which associates with DNA-bound CBF-1/RBPJ. The activated membrane-bound form interacts with AAK1 which promotes NOTCH1 stabilization. Forms a trimeric complex with FBXW7 and SGK1. Interacts with HIF1AN. HIF1AN negatively regulates the function of notch intracellular domain (NICD), accelerating myogenic differentiation. Interacts (via NICD) with SNAI1 (via zinc fingers); the interaction induces SNAI1 degradation via MDM2-mediated ubiquitination and inhibits SNAI1-induced cell invasion. Interacts (via NICD) with MDM2A. Interacts (via NICD) with BCL6; the interaction decreases MAML1 recruitment by NOTCH1 NICD on target genes DNA and inhibits NOTCH1 transactivation activity. Interacts with THBS4. Interacts (via the EGF-like repeat region) with CCN3 (via CTCK domain). Interacts (via EGF-like domains) with DLL4 (via N-terminal DSL and MNNL domains). Interacts with ZMIZ1. Interacts (via NICD domain) with MEGF10 (via the cytoplasmic domain). Interacts with DLL1 and JAG1. Interacts (via NICD domain) with PRAG1. Forms a complex with PRAG1, N1ICD and MAML1, in a MAML1-dependent manner. Interacts (via transmembrane region) with PSEN1; the interaction is direct. Interacts with ZFP64. Synthesized in the endoplasmic reticulum as an inactive form which is proteolytically cleaved by a furin-like convertase in the trans-Golgi network before it reaches the plasma membrane to yield an active, ligand-accessible form. Cleavage results in a C-terminal fragment N(TM) and a N-terminal fragment N(EC). Following ligand binding, it is cleaved by ADAM17 to yield a membrane-associated intermediate fragment called notch extracellular truncation (NEXT). Following endocytosis, this fragment is then cleaved by one of the catalytic subunits of gamma-secretase (PSEN1 or PSEN2) to release a Notch-derived peptide containing the intracellular domain (NICD) from the membrane. Post-translationally, phosphorylated. In terms of processing, O-linked glycosylation by GALNT11 is involved in determination of left/right symmetry: glycosylation promotes activation of NOTCH1, possibly by promoting cleavage by ADAM17, modulating the balance between motile and immotile (sensory) cilia at the left-right organiser (LRO). O-glycosylated on the EGF-like domains. O-glucosylated at Ser-451 by KDELC1 and KDELC2. Contains both O-linked fucose and O-linked glucose in the EGF-like domains 11, 12 and 13, which are interacting with the residues on DLL4. MFNG-, RFNG- and LFNG-mediated modification of O-fucose residues at specific EGF-like domains results in inhibition of its activation by JAG1 and enhancement of its activation by DLL1 via an increased binding to DLL1. Ubiquitinated. Undergoes 'Lys-29'-linked polyubiquitination by ITCH; promotes the lysosomal degradation of non-activated internalized NOTCH1. Deubiquitination by USP12 is required for transport of internalized non-activated receptor from late endosomes to lysosomes for degradation. Monoubiquitination at Lys-1765 is required for activation by gamma-secretase cleavage, it promotes interaction with AAK1, which stabilizes it. Deubiquitination by EIF3F is necessary for nuclear import of activated Notch. Post-translationally, hydroxylated at Asn-1961 by HIF1AN. Hydroxylated at Asn-2028 by HIF1AN. Hydroxylation reduces affinity for HI1AN and may thus indirectly modulate negative regulation of NICD.

Its subcellular location is the cell membrane. The protein resides in the late endosome membrane. It localises to the nucleus. Its function is as follows. Functions as a receptor for membrane-bound ligands Jagged-1 (JAG1), Jagged-2 (JAG2) and Delta-1 (DLL1) to regulate cell-fate determination. Upon ligand activation through the released notch intracellular domain (NICD) it forms a transcriptional activator complex with RBPJ/RBPSUH and activates genes of the enhancer of split locus. Affects the implementation of differentiation, proliferation and apoptotic programs. Involved in angiogenesis; negatively regulates endothelial cell proliferation and migration and angiogenic sprouting. Involved in the maturation of both CD4(+) and CD8(+) cells in the thymus. Important for follicular differentiation and possibly cell fate selection within the follicle. During cerebellar development, functions as a receptor for neuronal DNER and is involved in the differentiation of Bergmann glia. Represses neuronal and myogenic differentiation. May play an essential role in postimplantation development, probably in some aspect of cell specification and/or differentiation. May be involved in mesoderm development, somite formation and neurogenesis. May enhance HIF1A function by sequestering HIF1AN away from HIF1A. Required for the THBS4 function in regulating protective astrogenesis from the subventricular zone (SVZ) niche after injury. Involved in determination of left/right symmetry by modulating the balance between motile and immotile (sensory) cilia at the left-right organiser (LRO). The polypeptide is Neurogenic locus notch homolog protein 1 (NOTCH1) (Cricetulus griseus (Chinese hamster)).